The sequence spans 153 residues: Peptidoglycan-associated lipoprotein (153 aa).

A signal peptide spans Met-1 to Ala-19. Residue Cys-20 is the site of N-palmitoyl cysteine attachment. The S-diacylglycerol cysteine moiety is linked to residue Cys-20. Positions Ser-40–Tyr-153 constitute an OmpA-like domain. 2 peptidoglycan binding regions span residues Phe-55 to Asp-56 and Tyr-97 to Leu-101.

It belongs to the Pal lipoprotein family. In terms of assembly, the Tol-Pal system is composed of five core proteins: the inner membrane proteins TolA, TolQ and TolR, the periplasmic protein TolB and the outer membrane protein Pal. They form a network linking the inner and outer membranes and the peptidoglycan layer.

It is found in the cell outer membrane. Its function is as follows. Part of the Tol-Pal system, which plays a role in outer membrane invagination during cell division and is important for maintaining outer membrane integrity. The polypeptide is Peptidoglycan-associated lipoprotein (Haemophilus influenzae (strain ATCC 51907 / DSM 11121 / KW20 / Rd)).